The primary structure comprises 545 residues: MIQGLESIMNQGTKRILLAATLAATPWQVYGSIEQPSLLPTPPMGFNNWARFMCDLNETLFTETADTMAANGLRDAGYNRINLDDCWMAYQRSDNGSLQWNTTKFPHGLPWLAKYVKAKGFHFGIYEDSGNMTCGGYPGSYNHEEQDANTFASWGIDYLKLDGCNVYATQGRTLEEEYKQRYGHWHQVLSKMQHPLIFSESAPAYFAGTDNNTDWYTVMDWVPIYGELARHSTDILVYSGAGSAWDSIMNNYNYNTLLARYQRPGYFNDPDFLIPDHPGLTADEKRSHFALWASFSAPLIISAYIPALSKDEIAFLTNEALIAVNQDPLAQQATLASRDDTLDILTRSLANGDRLLTVLNKGNTTVTRDIPVQWLGLTETDCTYTAEDLWDGKTQKISDHIKIELASHATAVFRLSLPQGCSSVVPTGLVFNTASGNCLTAASNSSVAFQSCNGETSQIWQVTPSGVIRPVSQTTQCLAADGNLVKLQACDSTDSDGQKWTYPVTGNLKNAKTDGCLTEGSVQMKSCLYERDGQVFGLPSGVQLA.

Residues 1–31 (MIQGLESIMNQGTKRILLAATLAATPWQVYG) form the signal peptide. Cysteine 54 and cysteine 86 are disulfide-bonded. Asparagine 57, asparagine 95, asparagine 101, and asparagine 131 each carry an N-linked (GlcNAc...) asparagine glycan. Cysteines 134 and 164 form a disulfide. Aspartate 162 (nucleophile) is an active-site residue. The N-linked (GlcNAc...) asparagine glycan is linked to asparagine 211. Aspartate 220 (proton donor) is an active-site residue. N-linked (GlcNAc...) asparagine glycosylation is found at asparagine 363 and asparagine 444. Positions 421–518 (CSSVVPTGLV…KNAKTDGCLT (98 aa)) constitute a Ricin B-type lectin domain. 2 disulfide bridges follow: cysteine 438–cysteine 452 and cysteine 477–cysteine 490.

This sequence belongs to the glycosyl hydrolase 27 family. A C-terminal Ser/Thr-rich region may provide possible sites for O-glycosylation.

The protein localises to the secreted. The catalysed reaction is Hydrolysis of terminal, non-reducing alpha-D-galactose residues in alpha-D-galactosides, including galactose oligosaccharides, galactomannans and galactolipids.. Functionally, hydrolyzes a variety of simple alpha-D-galactoside as well as more complex molecules such as oligosaccharides and polysaccharides. The protein is Alpha-galactosidase A (aglA) of Aspergillus niger.